Reading from the N-terminus, the 2313-residue chain is Serine/threonine-protein kinase smg-1 (2313 aa).

Basic and acidic residues predominate over residues 779–791; it reads NRKSSDKKPKSTT. The interval 779–798 is disordered; sequence NRKSSDKKPKSTTEDVPPPA. One can recognise an FAT domain in the interval 1045-1528; the sequence is ARERLQLVES…VFQVVSGAAS (484 aa). One copy of the HEAT repeat lies at 1478-1514; it reads VHVWKEILPQLFARLSHPSDHIRKTLVDLISRVCTAA. A PI3K/PI4K catalytic domain is found at 1746–2091; sequence VADNVTILPT…DTIELFQLRV (346 aa). Positions 1752–1758 are G-loop; that stretch reads ILPTKTR. Residues 1954-1962 are catalytic loop; the sequence is GLGDRHLDN. The activation loop stretch occupies residues 1974–1998; it reads HIDYNICFDKGKILRIPETVPFRLS. An FATC domain is found at 2281–2313; that stretch reads RKLSPREEADVLIAEATSSANLAQMYEGWTAWV.

It belongs to the PI3/PI4-kinase family. Component of a post-splicing multiprotein NMD complex. Requires Mn(2+) as cofactor.

Its subcellular location is the cytoplasm. The catalysed reaction is L-seryl-[protein] + ATP = O-phospho-L-seryl-[protein] + ADP + H(+). It carries out the reaction L-threonyl-[protein] + ATP = O-phospho-L-threonyl-[protein] + ADP + H(+). Functionally, serine/threonine protein kinase involved in mRNA surveillance. Recognizes the substrate consensus sequence [ST]-Q. Involved in nonsense-mediated decay (NMD) of mRNAs containing premature stop codons by phosphorylating smg-2. The sequence is that of Serine/threonine-protein kinase smg-1 (smg-1) from Caenorhabditis briggsae.